The chain runs to 51 residues: Sperm protamine P1 (51 aa).

This sequence belongs to the protamine P1 family. In terms of tissue distribution, testis.

The protein localises to the nucleus. The protein resides in the chromosome. Functionally, protamines substitute for histones in the chromatin of sperm during the haploid phase of spermatogenesis. They compact sperm DNA into a highly condensed, stable and inactive complex. In Trachypithecus francoisi (Francois' leaf monkey), this protein is Sperm protamine P1 (PRM1).